The following is a 730-amino-acid chain: MGRRKKMVERVTMLMNEPTKIRNIGIVAHIDHGKTTLSDNLLAGAGMISKELAGRQLFMDSDEEEQERGITIDSSNVSMVHNFDNEDYLINLIDTPGHVDFGGDVTRAMRAVDGAVVVVDAVEGTMPQTETVLRQALREHVRPVLFVNKVDRLINELKVDSQEMQIRLGKVIDHVNKLIKNMNPEKYKEGWRVDAAAGTVAFGSALYNWAISVPMMKKTGVSFKDVYDYCKAGDMKSLAEKCPLHEAVLDMVIHFLPDPIEAQKDRVKVIWHGDENSEIGTSMTHANADGDLAFMVTDISVDPHAGEVATGRLFSGSFSRGMEVFTSGTAKKSRVQQVSIFMGPERLEVDKIPAGNIAAVTGLKEAIVGSTVTTLDGMEPFESIRHVSEPVVTVAVEAKHTKDLPKLIEVLRQVAKEDPTLQITLDEETGEHLMAGMGELHLEVIAHRIERDKNVEITTSKPIVVYRETIKKKIEPVEGKSPNRHNRFYIYVEPLDLEIVSAIKSGEIHMNLPELERRQKLIDLGMEKEEAKGIVGIFNSNIFIDMTKGIQYLNETMELILDGFEEVMRAGPLTREPVANVKCVLVDAKLHEDAIHRGPAQVIPASRQAIQAGMLMADDTLLEPYQKVFVQVPQLLMGGATKELQGRRGIILNMSTEGDLAIIEARVPVAEMFGFAGEIRSATEGRAMWSTEFGGFDIVPTSIQNDIVGQIRERKGLKKELPKASDFLSI.

In terms of domain architecture, tr-type G spans 19–228; that stretch reads TKIRNIGIVA…TGVSFKDVYD (210 aa). Residues 28-35, 94-98, and 148-151 each bind GTP; these read AHIDHGKT, DTPGH, and NKVD. At His-596 the chain carries Diphthamide.

It belongs to the TRAFAC class translation factor GTPase superfamily. Classic translation factor GTPase family. EF-G/EF-2 subfamily.

Its subcellular location is the cytoplasm. Functionally, catalyzes the GTP-dependent ribosomal translocation step during translation elongation. During this step, the ribosome changes from the pre-translocational (PRE) to the post-translocational (POST) state as the newly formed A-site-bound peptidyl-tRNA and P-site-bound deacylated tRNA move to the P and E sites, respectively. Catalyzes the coordinated movement of the two tRNA molecules, the mRNA and conformational changes in the ribosome. This is Elongation factor 2 from Methanosarcina barkeri (strain Fusaro / DSM 804).